A 62-amino-acid chain; its full sequence is MARECYITGRKARSGNKRSHAMNKSKRRFGANVQKVRILVDGKPKRVYVSARALKSGKVERV.

A disordered region spans residues 1-27 (MARECYITGRKARSGNKRSHAMNKSKR). The segment covering 10–27 (RKARSGNKRSHAMNKSKR) has biased composition (basic residues).

This sequence belongs to the bacterial ribosomal protein bL28 family.

The sequence is that of Large ribosomal subunit protein bL28 from Shouchella clausii (strain KSM-K16) (Alkalihalobacillus clausii).